The sequence spans 164 residues: Lipoprotein signal peptidase (164 aa).

A run of 3 helical transmembrane segments spans residues Phe-12–Ala-32, Trp-70–Thr-90, and Gln-93–Phe-113. Catalysis depends on residues Asp-123 and Asp-141. The helical transmembrane segment at Tyr-133 to Ile-153 threads the bilayer.

Belongs to the peptidase A8 family.

It is found in the cell inner membrane. The enzyme catalyses Release of signal peptides from bacterial membrane prolipoproteins. Hydrolyzes -Xaa-Yaa-Zaa-|-(S,diacylglyceryl)Cys-, in which Xaa is hydrophobic (preferably Leu), and Yaa (Ala or Ser) and Zaa (Gly or Ala) have small, neutral side chains.. It participates in protein modification; lipoprotein biosynthesis (signal peptide cleavage). This protein specifically catalyzes the removal of signal peptides from prolipoproteins. This chain is Lipoprotein signal peptidase, found in Pseudoalteromonas atlantica (strain T6c / ATCC BAA-1087).